The primary structure comprises 57 residues: Preprotein translocase subunit SecG (57 aa).

Over 1 to 33 (MARRRKYEGLNPFVAAGLIKFSEEGELERIKLN) the chain is Cytoplasmic. A helical transmembrane segment spans residues 34 to 55 (PRTAILVSITVIIAILVLNILH). Topologically, residues 56 to 57 (PL) are extracellular.

It belongs to the SEC61-beta family. As to quaternary structure, component of the protein translocase complex. Heterotrimer consisting of alpha (SecY), beta (SecG) and gamma (SecE) subunits. Can form oligomers of the heterotrimer.

It localises to the cell membrane. Involved in protein export. The function of the beta subunit is unknown, but it may be involved in stabilization of the trimeric complex. This chain is Preprotein translocase subunit SecG, found in Pyrobaculum islandicum (strain DSM 4184 / JCM 9189 / GEO3).